Reading from the N-terminus, the 335-residue chain is Adenosine deaminase (335 aa).

Residues His12 and His14 each contribute to the Zn(2+) site. The substrate site is built by His14 and Asp16. A Zn(2+)-binding site is contributed by His197. The Proton donor role is filled by Glu200. Residue Asp278 coordinates Zn(2+).

The protein belongs to the metallo-dependent hydrolases superfamily. Adenosine and AMP deaminases family. Adenosine deaminase subfamily. The cofactor is Zn(2+).

It carries out the reaction adenosine + H2O + H(+) = inosine + NH4(+). The enzyme catalyses 2'-deoxyadenosine + H2O + H(+) = 2'-deoxyinosine + NH4(+). Functionally, catalyzes the hydrolytic deamination of adenosine and 2-deoxyadenosine. The protein is Adenosine deaminase of Clostridium botulinum (strain Langeland / NCTC 10281 / Type F).